A 294-amino-acid polypeptide reads, in one-letter code: MYB-like transcription factor ODO1 (294 aa).

HTH myb-type domains are found at residues 9 to 61 (KLGV…TNYL) and 62 to 116 (RPDL…KKKL). 2 consecutive DNA-binding regions (H-T-H motif) follow at residues 37–61 (WRAV…TNYL) and 89–112 (WSKI…NTHI). Disordered stretches follow at residues 128–152 (PLKK…NGHQ) and 171–191 (TEFD…NSSC).

In terms of tissue distribution, restricted to the petals, with the highest expression in the limb, probably in both epidermal and mesophyll cell layers.

It localises to the nucleus. Functionally, R2R3 MYB-type transcription factor controlling the production of volatile organic compounds (VOCs), including floral volatile benzenoids and phenylpropanoids (FVBP), in flowers of fragrant cultivars (e.g. cv. Mitchell and cv. V26) by regulating the shikimate pathway, via the activation of several genes (e.g. EPSPS, ADT1, PAL1, CFAT and CCoAOMT1). This scent, mostly produced in the evening and night by the petals, attracts the pollinators (e.g. the night-active hawkmoth pollinator Manduca sexta). Promotes the expression of ABCG1 in petals three hours before the onset of volatile scent emission. Anthocyanins production is not controlled by ODO1 as color and scent are produced at different stages of development. Seems to trigger a negative feed-back loop that represses the expression of EOBI. This chain is MYB-like transcription factor ODO1, found in Petunia hybrida (Petunia).